A 173-amino-acid chain; its full sequence is Alpha-crystallin A chain (173 aa).

M1 carries the N-acetylmethionine modification. The interval 1-63 (MDVTIQHPWF…RTVLDSGISE (63 aa)) is required for complex formation with BFSP1 and BFSP2. Residue Q6 is modified to Deamidated glutamine; partial. The residue at position 45 (S45) is a Phosphoserine. A Deamidated glutamine; partial modification is found at Q50. Residues 52–162 (LFRTVLDSGI…GHSERAIPVS (111 aa)) form the sHSP domain. K70 bears the N6-acetyllysine mark. Residue Q90 is modified to Deamidated glutamine; partial. Residue K99 is modified to N6-acetyllysine. Residue H100 participates in Zn(2+) binding. N101 carries the deamidated asparagine; partial modification. Residues E102 and H107 each contribute to the Zn(2+) site. The residue at position 122 (S122) is a Phosphoserine. At N123 the chain carries Deamidated asparagine; partial. Residues 145-173 (KVQSGLDAGHSERAIPVSREEKPSSAPSS) form a disordered region. A Deamidated glutamine; partial modification is found at Q147. The span at 153-167 (GHSERAIPVSREEKP) shows a compositional bias: basic and acidic residues. Residue H154 coordinates Zn(2+). A glycan (O-linked (GlcNAc) serine) is linked at S162.

It belongs to the small heat shock protein (HSP20) family. Heteromer composed of three CRYAA and one CRYAB subunits. Inter-subunit bridging via zinc ions enhances stability, which is crucial as there is no protein turn over in the lens. Can also form homodimers and homotetramers (dimers of dimers) which serve as the building blocks of homooligomers. Within homooligomers, the zinc-binding motif is created from residues of 3 different molecules. His-100 and Glu-102 from one molecule are ligands of the zinc ion, and His-107 and His-154 residues from additional molecules complete the site with tetrahedral coordination geometry. Part of a complex required for lens intermediate filament formation composed of BFSP1, BFSP2 and CRYAA. Post-translationally, acetylation at Lys-70 may increase chaperone activity. In terms of processing, undergoes age-dependent proteolytical cleavage at the C-terminus.

The protein localises to the cytoplasm. It localises to the nucleus. Its function is as follows. Contributes to the transparency and refractive index of the lens. Acts as a chaperone, preventing aggregation of various proteins under a wide range of stress conditions. Required for the correct formation of lens intermediate filaments as part of a complex composed of BFSP1, BFSP2 and CRYAA. This is Alpha-crystallin A chain (CRYAA) from Cavia porcellus (Guinea pig).